A 411-amino-acid chain; its full sequence is Arginine deiminase (411 aa).

Catalysis depends on Cys401, which acts as the Amidino-cysteine intermediate.

This sequence belongs to the arginine deiminase family.

The protein localises to the cytoplasm. The catalysed reaction is L-arginine + H2O = L-citrulline + NH4(+). The protein operates within amino-acid degradation; L-arginine degradation via ADI pathway; carbamoyl phosphate from L-arginine: step 1/2. The sequence is that of Arginine deiminase from Staphylococcus aureus (strain JH9).